The primary structure comprises 90 residues: Cell division topological specificity factor (90 aa).

This sequence belongs to the MinE family.

Prevents the cell division inhibition by proteins MinC and MinD at internal division sites while permitting inhibition at polar sites. This ensures cell division at the proper site by restricting the formation of a division septum at the midpoint of the long axis of the cell. The protein is Cell division topological specificity factor of Francisella tularensis subsp. tularensis (strain FSC 198).